We begin with the raw amino-acid sequence, 223 residues long: Deoxyribose-phosphate aldolase (223 aa).

The Proton donor/acceptor role is filled by aspartate 91. Residue lysine 154 is the Schiff-base intermediate with acetaldehyde of the active site. Lysine 183 functions as the Proton donor/acceptor in the catalytic mechanism.

This sequence belongs to the DeoC/FbaB aldolase family. DeoC type 1 subfamily.

It is found in the cytoplasm. The catalysed reaction is 2-deoxy-D-ribose 5-phosphate = D-glyceraldehyde 3-phosphate + acetaldehyde. The protein operates within carbohydrate degradation; 2-deoxy-D-ribose 1-phosphate degradation; D-glyceraldehyde 3-phosphate and acetaldehyde from 2-deoxy-alpha-D-ribose 1-phosphate: step 2/2. Functionally, catalyzes a reversible aldol reaction between acetaldehyde and D-glyceraldehyde 3-phosphate to generate 2-deoxy-D-ribose 5-phosphate. The protein is Deoxyribose-phosphate aldolase of Geobacillus thermodenitrificans (strain NG80-2).